Here is a 356-residue protein sequence, read N- to C-terminus: Guanine nucleotide-binding protein alpha-2 subunit (356 aa).

The N-myristoyl glycine moiety is linked to residue glycine 2. Residue cysteine 4 is the site of S-palmitoyl cysteine attachment. The G-alpha domain occupies 35 to 356 (REVKLLLLGA…LTNNLRDIVL (322 aa)). The interval 38-51 (KLLLLGAGESGKST) is G1 motif. Positions 46, 47, 48, 49, 50, 51, 153, 178, 184, 206, 272, 273, 275, and 329 each coordinate GTP. Serine 50 provides a ligand contact to Mg(2+). A G2 motif region spans residues 176 to 184 (DILRCRNKT). Threonine 184 is a Mg(2+) binding site. Residues 199-208 (YRIFDVGGQR) are G3 motif. The G4 motif stretch occupies residues 268–275 (ILFLNKVD). Positions 327-332 (TNATDV) are G5 motif.

The protein belongs to the G-alpha family. In terms of assembly, g proteins are composed of 3 units; alpha, beta and gamma. The alpha chain contains the guanine nucleotide binding site. It depends on Mg(2+) as a cofactor.

In terms of biological role, guanine nucleotide-binding proteins (G proteins) are involved as modulators or transducers in various transmembrane signaling systems. The sequence is that of Guanine nucleotide-binding protein alpha-2 subunit (GPA2) from Mycosarcoma maydis (Corn smut fungus).